The primary structure comprises 85 residues: MAHKKAGGSTRNGRDSESKRLGVKCFGGELVNAGGIIVRQRGTRFHPGANVGCGRDHTLFALTTGKIQFEVKGPKNRKFVSIVAE.

The protein belongs to the bacterial ribosomal protein bL27 family.

The chain is Large ribosomal subunit protein bL27 from Sodalis glossinidius (strain morsitans).